Here is a 394-residue protein sequence, read N- to C-terminus: Phosphoglycerate kinase (394 aa).

Substrate is bound by residues 21-23 (DFN), R36, 59-62 (HLGR), R118, and R151. Residues K202, G293, E324, and 350–353 (GGDS) each bind ATP.

The protein belongs to the phosphoglycerate kinase family. Monomer.

It localises to the cytoplasm. It carries out the reaction (2R)-3-phosphoglycerate + ATP = (2R)-3-phospho-glyceroyl phosphate + ADP. The protein operates within carbohydrate degradation; glycolysis; pyruvate from D-glyceraldehyde 3-phosphate: step 2/5. In Exiguobacterium sp. (strain ATCC BAA-1283 / AT1b), this protein is Phosphoglycerate kinase.